A 308-amino-acid polypeptide reads, in one-letter code: 4-diphosphocytidyl-2-C-methyl-D-erythritol kinase (308 aa).

Residue K23 is part of the active site. An ATP-binding site is contributed by 108 to 118 (PVAAGIGGGSA). The active site involves D150.

Belongs to the GHMP kinase family. IspE subfamily.

The enzyme catalyses 4-CDP-2-C-methyl-D-erythritol + ATP = 4-CDP-2-C-methyl-D-erythritol 2-phosphate + ADP + H(+). Its pathway is isoprenoid biosynthesis; isopentenyl diphosphate biosynthesis via DXP pathway; isopentenyl diphosphate from 1-deoxy-D-xylulose 5-phosphate: step 3/6. Its function is as follows. Catalyzes the phosphorylation of the position 2 hydroxy group of 4-diphosphocytidyl-2C-methyl-D-erythritol. The chain is 4-diphosphocytidyl-2-C-methyl-D-erythritol kinase from Nitrobacter winogradskyi (strain ATCC 25391 / DSM 10237 / CIP 104748 / NCIMB 11846 / Nb-255).